A 449-amino-acid polypeptide reads, in one-letter code: Phosphoglucosamine mutase (449 aa).

Ser-101 serves as the catalytic Phosphoserine intermediate. Ser-101, Asp-243, Asp-245, and Asp-247 together coordinate Mg(2+). Ser-101 is modified (phosphoserine).

It belongs to the phosphohexose mutase family. Mg(2+) is required as a cofactor. In terms of processing, activated by phosphorylation.

It carries out the reaction alpha-D-glucosamine 1-phosphate = D-glucosamine 6-phosphate. Its function is as follows. Catalyzes the conversion of glucosamine-6-phosphate to glucosamine-1-phosphate. This is Phosphoglucosamine mutase from Syntrophus aciditrophicus (strain SB).